A 1297-amino-acid chain; its full sequence is Phosphoribosylformylglycinamidine synthase (1297 aa).

Positions 304 to 323 (PFPGAATGSGGEIRDEGATG) are disordered. ATP contacts are provided by residues 307-318 (GAATGSGGEIRD) and alanine 678. Mg(2+)-binding residues include aspartate 679, glutamate 718, asparagine 722, and aspartate 886. An ATP-binding site is contributed by serine 888. The Glutamine amidotransferase type-1 domain maps to 1043–1297 (RIAILREQGV…LFQNARVALG (255 aa)). Cysteine 1137 acts as the Nucleophile in catalysis. Active-site residues include histidine 1262 and glutamate 1264.

It in the N-terminal section; belongs to the FGAMS family. In terms of assembly, monomer.

It localises to the cytoplasm. The enzyme catalyses N(2)-formyl-N(1)-(5-phospho-beta-D-ribosyl)glycinamide + L-glutamine + ATP + H2O = 2-formamido-N(1)-(5-O-phospho-beta-D-ribosyl)acetamidine + L-glutamate + ADP + phosphate + H(+). Its pathway is purine metabolism; IMP biosynthesis via de novo pathway; 5-amino-1-(5-phospho-D-ribosyl)imidazole from N(2)-formyl-N(1)-(5-phospho-D-ribosyl)glycinamide: step 1/2. Its function is as follows. Phosphoribosylformylglycinamidine synthase involved in the purines biosynthetic pathway. Catalyzes the ATP-dependent conversion of formylglycinamide ribonucleotide (FGAR) and glutamine to yield formylglycinamidine ribonucleotide (FGAM) and glutamate. This is Phosphoribosylformylglycinamidine synthase from Histophilus somni (strain 129Pt) (Haemophilus somnus).